Reading from the N-terminus, the 150-residue chain is Large ribosomal subunit protein bL9 (150 aa).

This sequence belongs to the bacterial ribosomal protein bL9 family.

Functionally, binds to the 23S rRNA. This Lactiplantibacillus plantarum (strain ATCC BAA-793 / NCIMB 8826 / WCFS1) (Lactobacillus plantarum) protein is Large ribosomal subunit protein bL9.